An 800-amino-acid polypeptide reads, in one-letter code: MKFGREFETQMIQEWKEAYMDYRSLKSIVKQILRYRLQKQQRPPPPPPPPSTGDTVPLKTDGGEGGGGGGGGGPGLSRRISLYRAFSGLTNRASRSPKKSHKHHNPLSSKRHHHHHNHHHYHLFDDDEEQIILINEDETASYTTTFLNSAEEGGEMEVQFFRRLDGEFNKVLRFYKQKVENVMEEADELSRQLNVLIALRVKVENPHVHLPPDLNSVASAPSSPHSTMRTPAPSPMDVIREMEKTEDKKVFKPAPVEMLDHVKLKIDPETPLLTLKMMILGLPSEQTFSKPELRRAEELMNRAFVEFYQKLRFLKSYCFLNQLAFAKILKKYDKTTSRNASKPYLNTVDHSYLGSCDEVSRLMSRVEATFIKHFANGNHREGMKCLRPKTKREKHRITYFLGFFSGCAVALAIAITVLVHIRGLTKSEGRHQYMENIFPLYSLFGFVAVHLFMYAADIYFWSRYRVNYPFIFGFEQGNDLGYREVLLVGSGLAVLTFGGVISNLDMEMDPRTKSFSVITELVPLALLVCLMMVLFCPFNIIYRSSRYFFVGSVFRCLLSPLYKVILPDFFLADQLTSQVQTFRSLLFYVCYYGWGGDFKRRTHTCYDSEIYKELYLVVAIIPYWFRFAQSIRRLVEEKDKMHGLNALKYLSTILAVAARTIFEMKRGTYWLTVAVTTSSIATLFNTYWDIFRDWGLMNRNSKNPWLRDKLLVPYKSIYFIVMVANVVLRLAWMQTVLGIKEAPFLHKRALVAVVASLEIVRRGIWNFFRLENEHLNNVGKYRAFKSVPLPFQELGGSKSV.

One can recognise an SPX domain in the interval 1–346; it reads MKFGREFETQ…SRNASKPYLN (346 aa). The Cytoplasmic segment spans residues 1–398; that stretch reads MKFGREFETQ…KTKREKHRIT (398 aa). Disordered stretches follow at residues 38–77, 91–119, and 212–234; these read QKQQ…PGLS, NRAS…HNHH, and PDLN…PAPS. Positions 42-51 are enriched in pro residues; the sequence is RPPPPPPPPS. Residues 63 to 75 show a composition bias toward gly residues; it reads GEGGGGGGGGGPG. The segment covering 95–119 has biased composition (basic residues); that stretch reads RSPKKSHKHHNPLSSKRHHHHHNHH. A compositionally biased stretch (polar residues) spans 216-229; that stretch reads SVASAPSSPHSTMR. The chain crosses the membrane as a helical span at residues 399 to 419; it reads YFLGFFSGCAVALAIAITVLV. Residues 420 to 439 lie on the Extracellular side of the membrane; sequence HIRGLTKSEGRHQYMENIFP. The chain crosses the membrane as a helical span at residues 440 to 460; it reads LYSLFGFVAVHLFMYAADIYF. The Cytoplasmic segment spans residues 461 to 483; that stretch reads WSRYRVNYPFIFGFEQGNDLGYR. The helical transmembrane segment at 484–504 threads the bilayer; sequence EVLLVGSGLAVLTFGGVISNL. At 505–520 the chain is on the extracellular side; sequence DMEMDPRTKSFSVITE. A helical transmembrane segment spans residues 521–541; sequence LVPLALLVCLMMVLFCPFNII. The Cytoplasmic segment spans residues 542 to 670; the sequence is YRSSRYFFVG…IFEMKRGTYW (129 aa). The 195-residue stretch at 606 to 800 folds into the EXS domain; it reads YDSEIYKELY…FQELGGSKSV (195 aa). Residues 671-691 traverse the membrane as a helical segment; that stretch reads LTVAVTTSSIATLFNTYWDIF. At 692-718 the chain is on the extracellular side; sequence RDWGLMNRNSKNPWLRDKLLVPYKSIY. Residues 719-739 form a helical membrane-spanning segment; it reads FIVMVANVVLRLAWMQTVLGI. Residues 740-800 are Cytoplasmic-facing; the sequence is KEAPFLHKRA…FQELGGSKSV (61 aa).

The protein belongs to the SYG1 (TC 2.A.94) family. As to expression, specifically expressed in pollen grains.

The protein resides in the cell membrane. Functionally, may transport inorganic phosphate (Pi). The polypeptide is Phosphate transporter PHO1 homolog 9 (PHO1-H9) (Arabidopsis thaliana (Mouse-ear cress)).